The chain runs to 109 residues: Nucleoid-associated protein LJ_0424 (109 aa).

The protein belongs to the YbaB/EbfC family. In terms of assembly, homodimer.

It is found in the cytoplasm. It localises to the nucleoid. Binds to DNA and alters its conformation. May be involved in regulation of gene expression, nucleoid organization and DNA protection. In Lactobacillus johnsonii (strain CNCM I-12250 / La1 / NCC 533), this protein is Nucleoid-associated protein LJ_0424.